The sequence spans 436 residues: Eukaryotic peptide chain release factor subunit 1-1 (436 aa).

The protein belongs to the eukaryotic release factor 1 family. As to quaternary structure, heterodimer of two subunits, one of which binds GTP.

The protein localises to the cytoplasm. Functionally, directs the termination of nascent peptide synthesis (translation) in response to the termination codons UAA, UAG and UGA. Modulates plant growth and development. The protein is Eukaryotic peptide chain release factor subunit 1-1 (ERF1-1) of Arabidopsis thaliana (Mouse-ear cress).